The chain runs to 296 residues: 4-hydroxybenzoate octaprenyltransferase (296 aa).

Helical transmembrane passes span 28-48, 51-71, 102-122, 143-163, 174-194, 212-232, 233-253, and 274-294; these read IGTL…SDGI, LAVL…GCVI, LLLT…LNHL, FFPI…PMAF, AWIL…VYAM, FGRY…LLMA, VLGA…IVLL, and FLAN…HTFF.

It belongs to the UbiA prenyltransferase family. The cofactor is Mg(2+).

It is found in the cell inner membrane. It carries out the reaction all-trans-octaprenyl diphosphate + 4-hydroxybenzoate = 4-hydroxy-3-(all-trans-octaprenyl)benzoate + diphosphate. It functions in the pathway cofactor biosynthesis; ubiquinone biosynthesis. Its function is as follows. Catalyzes the prenylation of para-hydroxybenzoate (PHB) with an all-trans polyprenyl group. Mediates the second step in the final reaction sequence of ubiquinone-8 (UQ-8) biosynthesis, which is the condensation of the polyisoprenoid side chain with PHB, generating the first membrane-bound Q intermediate 3-octaprenyl-4-hydroxybenzoate. The polypeptide is 4-hydroxybenzoate octaprenyltransferase (Neisseria gonorrhoeae (strain ATCC 700825 / FA 1090)).